The following is a 94-amino-acid chain: MPKLAVVLLVLLILPLSYFDAAGGQAVQWDRRGNGLARYLQRGDRDVRECQVDTPGSSWGKCCMTRMCGTMCCSRSVCTCVYHWRRGHGCSCPG.

The signal sequence occupies residues Met-1 to Gly-24. The propeptide occupies Gln-25–Arg-45. 4 cysteine pairs are disulfide-bonded: Cys-63–Cys-72, Cys-68–Cys-80, Cys-73–Cys-90, and Cys-78–Cys-92.

It belongs to the conotoxin D superfamily. Hetero-, homo- or pseudo-homodimer (identical sequence, different post-translational modifications). In terms of tissue distribution, expressed by the venom duct.

It is found in the secreted. Its function is as follows. Alpha-conotoxins act on postsynaptic membranes, they bind to the nicotinic acetylcholine receptors (nAChR) and thus inhibit them. Through its two C-terminal domains, this homodimeric protein would bind to two nAChR allosteric sites, located outside the nAChR C-loop of the principal binding face and at the adjacent binding interface in a clockwise direction. This toxin specifically blocks mammalian neuronal nAChR of the alpha-7/CHRNA7, alpha-3-beta-2/CHRNA3-CHRNB2 and alpha-4-beta-2/CHRNA4-CHRNB2 subtypes. In Conus capitaneus (Captain cone), this protein is Alpha-conotoxin-like Cp20.2.